The primary structure comprises 378 residues: Putative F-box protein At3g24580 (378 aa).

An F-box domain is found at 1–47; it reads MTKMSNLPNDLAEEVLSRVSLTSLRNVRLTCKDWNTLSKGESFAKNH.

The chain is Putative F-box protein At3g24580 from Arabidopsis thaliana (Mouse-ear cress).